Reading from the N-terminus, the 1166-residue chain is Serine-aspartate repeat-containing protein E (1166 aa).

Positions 1–52 (MINRDNKKAITKKGMISNRLNKFSIRKYTVGTASILVGTTLIFGLGNQEAKA) are cleaved as a signal peptide. A YSIRK-G/S signaling motif motif is present at residues 23-34 (FSIRKYTVGTAS). The segment at 53–606 (AENTSTENAK…GDGTVKPEEK (554 aa)) is ligand binding A region. A disordered region spans residues 54–253 (ENTSTENAKQ…HSTKPVATAP (200 aa)). Positions 61–75 (AKQDDATTSDNKEVV) are enriched in basic and acidic residues. Positions 77 to 90 (ETENNSTTENNSTN) are enriched in low complexity. Residues 92–108 (IKKETNTDSQPEAKKES) show a composition bias toward basic and acidic residues. Polar residues predominate over residues 118-129 (NNVTATTETKPQ). Over residues 130–145 (NIEKENVKPSTDKTAT) the composition is skewed to basic and acidic residues. Residues 166-178 (TTKPSTSEPSTSE) are compositionally biased toward low complexity. Positions 179-212 (IQTKPTTPQESTNIENSQPQPTPSKVDNQVTDAT) are enriched in polar residues. Residues 221–246 (SKEELKKNPEKLKELVRNDSNTDHST) are compositionally biased toward basic and acidic residues. CNA-B domains lie at 607 to 719 (LYKI…YKEP), 720 to 829 (KYNL…YKTP), and 830 to 940 (KYSL…EEDT). A disordered region spans residues 904–1141 (VTNTTEDDKD…TGSENNGSNN (238 aa)). Acidic residues-rich tracts occupy residues 908-918 (TEDDKDADGGE) and 935-1105 (YFEE…DSDS). The LPXTG sorting signal motif lies at 1129–1133 (LPETG). T1132 carries the pentaglycyl murein peptidoglycan amidated threonine modification. Residues 1133-1166 (GSENNGSNNATLFGGLFAALGSLLLFGRRKKQNK) constitute a propeptide, removed by sortase.

It belongs to the serine-aspartate repeat-containing protein (SDr) family. As to quaternary structure, interacts with host complement factor H/CFAH (via C-terminus). Interacts with host complement regulator C4BPA.

The protein localises to the secreted. It is found in the cell wall. Cell surface-associated calcium-binding protein which plays an important role in adhesion and pathogenesis. Contributes to the resistance to killing by innate immune components in blood and thus attenuates bacterial clearance by interacting with host complement factor H/CFAH and modulating its activity. Also inhibits bacterial opsonization and killing by interacting with host complement regulator C4BPA and thus inhibiting classical complement pathway activation. This is Serine-aspartate repeat-containing protein E (sdrE) from Staphylococcus aureus (strain COL).